A 300-amino-acid chain; its full sequence is Formamidopyrimidine-DNA glycosylase (300 aa).

The active-site Schiff-base intermediate with DNA is Pro2. Catalysis depends on Glu3, which acts as the Proton donor. The active-site Proton donor; for beta-elimination activity is Lys60. DNA-binding residues include His108, Arg136, and Arg181. The FPG-type zinc finger occupies 266 to 300 (WVYSRAGQPCRICNTPLEKIKLAGRSTHFCPQCQK). The Proton donor; for delta-elimination activity role is filled by Arg290.

This sequence belongs to the FPG family. In terms of assembly, monomer. Zn(2+) is required as a cofactor.

It catalyses the reaction Hydrolysis of DNA containing ring-opened 7-methylguanine residues, releasing 2,6-diamino-4-hydroxy-5-(N-methyl)formamidopyrimidine.. The catalysed reaction is 2'-deoxyribonucleotide-(2'-deoxyribose 5'-phosphate)-2'-deoxyribonucleotide-DNA = a 3'-end 2'-deoxyribonucleotide-(2,3-dehydro-2,3-deoxyribose 5'-phosphate)-DNA + a 5'-end 5'-phospho-2'-deoxyribonucleoside-DNA + H(+). Involved in base excision repair of DNA damaged by oxidation or by mutagenic agents. Acts as a DNA glycosylase that recognizes and removes damaged bases. Has a preference for oxidized purines, such as 7,8-dihydro-8-oxoguanine (8-oxoG). Has AP (apurinic/apyrimidinic) lyase activity and introduces nicks in the DNA strand. Cleaves the DNA backbone by beta-delta elimination to generate a single-strand break at the site of the removed base with both 3'- and 5'-phosphates. The polypeptide is Formamidopyrimidine-DNA glycosylase (Trichodesmium erythraeum (strain IMS101)).